A 515-amino-acid chain; its full sequence is Anterior pharynx in excess protein 1 (515 aa).

The first 26 residues, 1-26 (MTNFSSLLTTIFLCIISSATGSGTIE), serve as a signal peptide directing secretion. Topologically, residues 27 to 392 (LLISSPQTVL…QASDELQLRL (366 aa)) are extracellular. N-linked (GlcNAc...) asparagine glycosylation occurs at asparagine 123. A DSL domain is found at 130 to 172 (NLCSSNYHGKRCNRYCIANAKLHWECSTHGVRRCSAGWSGEDC). Disulfide bonds link cysteine 132-cysteine 141, cysteine 145-cysteine 155, cysteine 163-cysteine 172, cysteine 177-cysteine 187, cysteine 181-cysteine 193, cysteine 195-cysteine 204, cysteine 213-cysteine 218, cysteine 228-cysteine 237, cysteine 244-cysteine 256, cysteine 250-cysteine 268, cysteine 270-cysteine 279, cysteine 288-cysteine 300, cysteine 294-cysteine 310, and cysteine 312-cysteine 321. 4 consecutive EGF-like domains span residues 173-205 (SNPICAGGCSNRGRCVAPNQCSCADGFNGTRCE), 203-238 (RCEQCLPRAGCVNGDCVNETPNTCKCRDGFIGDRCD), 240-280 (DIKI…SQCK), and 284-322 (SKVRCSAEHVCKNGGACISMDDTNIQCKCRRGFSGKFCE). Asparagine 200 carries N-linked (GlcNAc...) asparagine glycosylation. In terms of domain architecture, EGF-like 5; incomplete spans 325–349 (NHGDCSAMRCSAGETCQISGDFAIC). A helical transmembrane segment spans residues 393–413 (IAAICVLFSVCVIGLALVSFF). Residues 414-515 (FYMHSFSKWK…AADDESSFRV (102 aa)) lie on the Cytoplasmic side of the membrane. 2 disordered regions span residues 427–452 (SQQAGGSTILPTTTSIPMSTTSSGTG) and 466–494 (RGNAPGSSSDSEPDHHCPPPHRHSPPPAY). Low complexity predominate over residues 431–452 (GGSTILPTTTSIPMSTTSSGTG).

The protein resides in the cell membrane. It is found in the nucleus. Its subcellular location is the cytoplasm. Its function is as follows. Probable ligand for lin-12/Notch and glp-1/Notch receptors and involved in the mediation of Notch signaling. Involved in the lin-12/Notch pathway signaling of cell fate in vulval precursor cells (VPCs), acting redundantly with dsl-1 and lag-2. Contributes to the establishment of the dorsal-ventral axis in early embryos. Involved in the specification of the blastomere cell ABp fate, probably acting as a signal from the P2 blastomere to the glp-1/Notch receptor on ABp and ABa. Probably acts as a signal, from the secondary vulval epithelial cells and the vulval muscle type 1 (vm1) cells, to activate the lin-12/Notch pathway in type 2 vulval muscle (vm2) cells, contributing to formation of the postsynaptic muscle plasma membrane extensions, known as muscle arms. Required for oocyte growth control, acting redundantly with lag-2, perhaps signaling via the glp-1/Notch pathway. Plays a somatic role in ovulation during adulthood, perhaps via lin-12/Notch signaling. Involved in establishing left-right asymmetry during intestinal organogenesis. This is Anterior pharynx in excess protein 1 (apx-1) from Caenorhabditis elegans.